We begin with the raw amino-acid sequence, 219 residues long: Phosphatidylserine decarboxylase proenzyme (219 aa).

Ser188 (schiff-base intermediate with substrate; via pyruvic acid) is an active-site residue. Ser188 carries the pyruvic acid (Ser); by autocatalysis modification.

This sequence belongs to the phosphatidylserine decarboxylase family. PSD-A subfamily. In terms of assembly, heterodimer of a large membrane-associated beta subunit and a small pyruvoyl-containing alpha subunit. It depends on pyruvate as a cofactor. Post-translationally, is synthesized initially as an inactive proenzyme. Formation of the active enzyme involves a self-maturation process in which the active site pyruvoyl group is generated from an internal serine residue via an autocatalytic post-translational modification. Two non-identical subunits are generated from the proenzyme in this reaction, and the pyruvate is formed at the N-terminus of the alpha chain, which is derived from the carboxyl end of the proenzyme. The post-translation cleavage follows an unusual pathway, termed non-hydrolytic serinolysis, in which the side chain hydroxyl group of the serine supplies its oxygen atom to form the C-terminus of the beta chain, while the remainder of the serine residue undergoes an oxidative deamination to produce ammonia and the pyruvoyl prosthetic group on the alpha chain.

The protein localises to the cell membrane. It catalyses the reaction a 1,2-diacyl-sn-glycero-3-phospho-L-serine + H(+) = a 1,2-diacyl-sn-glycero-3-phosphoethanolamine + CO2. The protein operates within phospholipid metabolism; phosphatidylethanolamine biosynthesis; phosphatidylethanolamine from CDP-diacylglycerol: step 2/2. In terms of biological role, catalyzes the formation of phosphatidylethanolamine (PtdEtn) from phosphatidylserine (PtdSer). This chain is Phosphatidylserine decarboxylase proenzyme, found in Trichlorobacter lovleyi (strain ATCC BAA-1151 / DSM 17278 / SZ) (Geobacter lovleyi).